The following is a 369-amino-acid chain: Capsid protein (369 aa).

The protein resides in the host nucleus. Its subcellular location is the virion. In terms of biological role, self-assembles to form the virion icosahedral capsid. This Avon-Heathcote Estuary associated kieseladnavirus (AHEaBV) protein is Capsid protein.